Reading from the N-terminus, the 92-residue chain is Small ribosomal subunit protein uS19 (92 aa).

The protein belongs to the universal ribosomal protein uS19 family.

In terms of biological role, protein S19 forms a complex with S13 that binds strongly to the 16S ribosomal RNA. In Leptospira biflexa serovar Patoc (strain Patoc 1 / Ames), this protein is Small ribosomal subunit protein uS19.